The chain runs to 413 residues: Glutaminase (413 aa).

The interval Gly-23 to Met-307 is glutaminase. Residues Ser-65, Asn-114, Glu-160, Asn-167, Tyr-191, Tyr-243, and Val-261 each contribute to the substrate site. In terms of domain architecture, STAS spans Ala-316 to Val-413.

Belongs to the glutaminase family. In terms of assembly, homotetramer.

The catalysed reaction is L-glutamine + H2O = L-glutamate + NH4(+). The protein is Glutaminase (glsA) of Corynebacterium glutamicum (strain ATCC 13032 / DSM 20300 / JCM 1318 / BCRC 11384 / CCUG 27702 / LMG 3730 / NBRC 12168 / NCIMB 10025 / NRRL B-2784 / 534).